The primary structure comprises 1333 residues: MRNLKLHRTLEFRDIQAPGKPQCFCLRAEQGTVLIGSERGLTEVDPVRREVKTEISLVAEGFLPEDGSGCIVGIQDLLDQESVCVATASGDVIVCNLSTQQLECVGSVASGISVMSWSPDQELLLLATAQQTLIMMTKDFEVIAEEQIHQDDFGEGKFVTVGWGSKQTQFHGSEGRPTAFPVQLPENALPWDDRRPHITWRGDGQYFAVSVVCRQTEARKIRVWNREFALQSTSESVPGLGPALAWKPSGSLIASTQDKPNQQDVVFFEKNGLLHGHFTLPFLKDEVKVNDLLWNADSSVLAIWLEDLPKEDSSTLKSYVQLWTVGNYHWYLKQSLPFSTTGKNQIVSLLWDPVTPCRLHVLCTGWRYLCCDWHWTTDRSSGNSANDLANVAVIDGNRVLVTVFRQTVVPPPMCTYRLLIPHPVNQVIFSAHLGNDLAVLDASNQISVYKCGDKPNMDSTVKLGAVGGNGFKVPLTTPHLEKRYSIQFGNNEEEEEEEVNALQLSFLTWVEDDTFLAISYSHSSSQSIIHHLTVTHSEVDEEQGQLDVSSSVTVDGVVIGLCCCSKTKSLAVQLADGQVLKYLWESPSLAVEPWKNSEGIPVRFVHPCTQMEVATIGGEECVLGLTDRCRFFINDTEVASNITSFAVCDDFLLVTTHSHTCQVFSLSGASLKMLQAALSGSHEASGEILRKVERGSRIVTVVPQDTKLILQMPRGNLEVVHHRALVLAQIRKWLDKLMFKEAFECMRKLRINLNLIHDHNPKVFLENVETFVKQIDSVNHINLFFTELREEDVTKTMYPPPITKSVQVSTHPDGKKLDLICDAMRAAMEAINPRKFCLSILTSHVKKTTPELEIVLQKVQELQGNLPFDPESVSVEEALKYLLLLVDVNELFNHSLGTYDFNLVLMVAEKSQKDPKEYLPFLNTLKKMETNYQRFTIDKYLKRYEKALGHLSKCGPEYFTECLNLIKDKNLYKEALKLYRPDSPQYQAVSMAYGEHLMQEHLYEPAGLVFARCGAQEKALEAFLACGSWQQALCVAAQLQMSKDKVAGLARTLAGKLVEQRKHSEAATVLEQYAQDYEEAVLLLLEGSAWEEALRLVYKYDRVDIIETSVKPSILEAQKNYMDFLDSETATFIRHKNRLQVVRALRRQAPQVHVDHEVAHGPESDLFSETSSIMSGSEMSGRYSHSNSRISARSSKNRRKAERKKHSLKEGSPLEGLALLEALSEVVQSVEKLKDEVRAILKVLFLFEFEEQAKELQRAFESTLQLMERAVPEIWTPAGQQSSTTPVLGPSSTANSITASYQQQKTCVPALDAGVYMPPKMDPRSQWKLSLLE.

Phosphoserine is present on residues serine 805, serine 1172, and serine 1175. Residues 886 to 1333 (VDVNELFNHS…RSQWKLSLLE (448 aa)) form a mediates dimerization region. Residues 1175-1209 (SGSEMSGRYSHSNSRISARSSKNRRKAERKKHSLK) are disordered. Positions 1192 to 1210 (ARSSKNRRKAERKKHSLKE) are required for binding to tRNA. Basic residues predominate over residues 1195-1207 (SKNRRKAERKKHS).

Belongs to the ELP1/IKA1 family. Homodimer; dimerization promotes ELP1 stability and elongator complex formation. Component of the elongator complex which consists of ELP1, ELP2, ELP3, ELP4, ELP5 and ELP6. Interacts preferentially with MAP3K14/NIK followed by IKK-alpha and IKK-beta. Phosphorylated. In terms of tissue distribution, in the testis, expression is restricted to germ cells during spermatogenesis with no expression detected in somatic cells such as Sertoli cells or Leydig cells (at protein level). In the ovary, expressed in oocytes of primary, secondary and antral follicles (at protein level). Widely expressed in adult tissues with highest levels in brain and also expressed at all embryonic stages.

It localises to the cytoplasm. The protein resides in the nucleus. It participates in tRNA modification; 5-methoxycarbonylmethyl-2-thiouridine-tRNA biosynthesis. Its function is as follows. Component of the elongator complex which is required for multiple tRNA modifications, including mcm5U (5-methoxycarbonylmethyl uridine), mcm5s2U (5-methoxycarbonylmethyl-2-thiouridine), and ncm5U (5-carbamoylmethyl uridine). The elongator complex catalyzes the formation of carboxymethyluridine in the wobble base at position 34 in tRNAs. Regulates the migration and branching of projection neurons in the developing cerebral cortex, through a process depending on alpha-tubulin acetylation. ELP1 binds to tRNA, mediating interaction of the elongator complex with tRNA. May act as a scaffold protein that assembles active IKK-MAP3K14 complexes (IKKA, IKKB and MAP3K14/NIK). In Mus musculus (Mouse), this protein is Elongator complex protein 1 (Elp1).